The sequence spans 625 residues: Threonine--tRNA ligase (625 aa).

Positions 1–147 are editing domain; it reads MRILLIHSDY…TIVPGEAKKE (147 aa). Positions 206–505 are catalytic; it reads PHVKIMLEQE…MKKGKKPMYP (300 aa). Cysteine 298, histidine 350, and histidine 474 together coordinate Zn(2+).

This sequence belongs to the class-II aminoacyl-tRNA synthetase family. Homodimer. It depends on Zn(2+) as a cofactor.

The protein localises to the cytoplasm. The catalysed reaction is tRNA(Thr) + L-threonine + ATP = L-threonyl-tRNA(Thr) + AMP + diphosphate + H(+). Its function is as follows. Catalyzes the attachment of threonine to tRNA(Thr) in a two-step reaction: L-threonine is first activated by ATP to form Thr-AMP and then transferred to the acceptor end of tRNA(Thr). Also edits incorrectly charged L-seryl-tRNA(Thr). The polypeptide is Threonine--tRNA ligase (Thermococcus sibiricus (strain DSM 12597 / MM 739)).